The primary structure comprises 192 residues: Ribonuclease HII (192 aa).

The region spanning 2 to 187 (KNLCGIDEAG…KALGENEIGV (186 aa)) is the RNase H type-2 domain. Residues Asp8, Glu9, and Asp97 each contribute to the a divalent metal cation site.

This sequence belongs to the RNase HII family. It depends on Mn(2+) as a cofactor. Mg(2+) serves as cofactor.

The protein localises to the cytoplasm. It catalyses the reaction Endonucleolytic cleavage to 5'-phosphomonoester.. Functionally, endonuclease that specifically degrades the RNA of RNA-DNA hybrids. The polypeptide is Ribonuclease HII (Aliarcobacter butzleri (strain RM4018) (Arcobacter butzleri)).